Reading from the N-terminus, the 483-residue chain is Probable glycosyltransferase 4 (483 aa).

Over 1 to 26 (MSKLQDRHGGEAAADVGRRARHQRLL) the chain is Cytoplasmic. A helical; Signal-anchor for type II membrane protein transmembrane segment spans residues 27 to 47 (LSFPVFPIVLLLLAPCTIFFF). The Lumenal segment spans residues 48-483 (TSGDVPLPRI…KKTSRAARPM (436 aa)). A disordered region spans residues 71–119 (AVAADTSPPPPSPPSSSPPPLSFPPPPPPPSSPPPPALPVVDDHSDTQR). Residues 77 to 108 (SPPPPSPPSSSPPPLSFPPPPPPPSSPPPPAL) are compositionally biased toward pro residues. An N-linked (GlcNAc...) asparagine glycan is attached at Asn448.

Belongs to the glycosyltransferase 34 family.

Its subcellular location is the golgi apparatus membrane. Probable glycosyltransferase that may be involved in the biosynthesis of xyloglucan. This Oryza sativa subsp. indica (Rice) protein is Probable glycosyltransferase 4.